A 530-amino-acid polypeptide reads, in one-letter code: Phosphoenolpyruvate carboxykinase (ATP) (530 aa).

Substrate-binding residues include arginine 57, tyrosine 193, and lysine 199. ATP-binding positions include lysine 199, histidine 218, and 234-242 (GLSGTGKTT). Positions 199 and 218 each coordinate Mn(2+). Residue aspartate 255 participates in Mn(2+) binding. Residues glutamate 283, arginine 320, and threonine 445 each contribute to the ATP site. Arginine 320 is a binding site for substrate.

This sequence belongs to the phosphoenolpyruvate carboxykinase (ATP) family. The cofactor is Mn(2+).

The protein resides in the cytoplasm. It carries out the reaction oxaloacetate + ATP = phosphoenolpyruvate + ADP + CO2. The protein operates within carbohydrate biosynthesis; gluconeogenesis. Functionally, involved in the gluconeogenesis. Catalyzes the conversion of oxaloacetate (OAA) to phosphoenolpyruvate (PEP) through direct phosphoryl transfer between the nucleoside triphosphate and OAA. The protein is Phosphoenolpyruvate carboxykinase (ATP) of Leptospira interrogans serogroup Icterohaemorrhagiae serovar copenhageni (strain Fiocruz L1-130).